The primary structure comprises 196 residues: Small ribosomal subunit protein uS4c (196 aa).

The tract at residues 15–43 (LGALPGLTRKTPKSGSNQKKKFHSGKKEQ) is disordered. In terms of domain architecture, S4 RNA-binding spans 89–150 (MRLDNILFRL…NQRSKRLVQN (62 aa)).

This sequence belongs to the universal ribosomal protein uS4 family. In terms of assembly, part of the 30S ribosomal subunit. Contacts protein S5. The interaction surface between S4 and S5 is involved in control of translational fidelity.

It is found in the plastid. The protein localises to the chloroplast. Functionally, one of the primary rRNA binding proteins, it binds directly to 16S rRNA where it nucleates assembly of the body of the 30S subunit. In terms of biological role, with S5 and S12 plays an important role in translational accuracy. The protein is Small ribosomal subunit protein uS4c (rps4) of Bothriochloa ischaemum (Yellow bluestem).